A 227-amino-acid polypeptide reads, in one-letter code: Large ribosomal subunit protein bL25 (227 aa).

This sequence belongs to the bacterial ribosomal protein bL25 family. CTC subfamily. As to quaternary structure, part of the 50S ribosomal subunit; part of the 5S rRNA/L5/L18/L25 subcomplex. Contacts the 5S rRNA. Binds to the 5S rRNA independently of L5 and L18.

This is one of the proteins that binds to the 5S RNA in the ribosome where it forms part of the central protuberance. The chain is Large ribosomal subunit protein bL25 from Polaromonas sp. (strain JS666 / ATCC BAA-500).